The sequence spans 140 residues: Nucleoside diphosphate kinase (140 aa).

ATP is bound by residues lysine 11, phenylalanine 59, arginine 87, threonine 93, arginine 104, and asparagine 114. The Pros-phosphohistidine intermediate role is filled by histidine 117.

The protein belongs to the NDK family. Homotetramer. It depends on Mg(2+) as a cofactor.

It is found in the cytoplasm. It catalyses the reaction a 2'-deoxyribonucleoside 5'-diphosphate + ATP = a 2'-deoxyribonucleoside 5'-triphosphate + ADP. It carries out the reaction a ribonucleoside 5'-diphosphate + ATP = a ribonucleoside 5'-triphosphate + ADP. In terms of biological role, major role in the synthesis of nucleoside triphosphates other than ATP. The ATP gamma phosphate is transferred to the NDP beta phosphate via a ping-pong mechanism, using a phosphorylated active-site intermediate. This Sinorhizobium fredii (strain NBRC 101917 / NGR234) protein is Nucleoside diphosphate kinase.